A 266-amino-acid chain; its full sequence is uncharacterized protein (266 aa).

A run of 7 helical transmembrane segments spans residues 25 to 45 (LPSLLVLGFLGGAFIALGYLL), 64 to 84 (IGAAVFPVGLILVVLAGAELI), 111 to 131 (IVTIMNLIGALFVAYFFGHLV), 158 to 178 (VLISAIGCNWLVCLAVWLSFG), 186 to 206 (ILGIWFPIMAFVAIGFQHVVA), 209 to 229 (FVIPAAIFAGSFTWGQFIGNI), and 230 to 250 (IPAFIGNVIGGAVFVGLIYFI).

Belongs to the FNT transporter (TC 1.A.16) family.

It is found in the cell membrane. This is an uncharacterized protein from Bacillus subtilis (strain 168).